A 157-amino-acid polypeptide reads, in one-letter code: Succinate dehydrogenase assembly factor 2-A, mitochondrial (157 aa).

Belongs to the SDHAF2 family. Interacts with the flavoprotein subunit within the SDH catalytic dimer.

Its subcellular location is the mitochondrion matrix. In terms of biological role, plays an essential role in the assembly of succinate dehydrogenase (SDH), an enzyme complex (also referred to as respiratory complex II) that is a component of both the tricarboxylic acid (TCA) cycle and the mitochondrial electron transport chain, and which couples the oxidation of succinate to fumarate with the reduction of ubiquinone (coenzyme Q) to ubiquinol. Required for flavinylation (covalent attachment of FAD) of the flavoprotein subunit of the SDH catalytic dimer. The chain is Succinate dehydrogenase assembly factor 2-A, mitochondrial from Drosophila willistoni (Fruit fly).